We begin with the raw amino-acid sequence, 155 residues long: Ribonuclease H (155 aa).

Residues Asp9 to Glu150 enclose the RNase H type-1 domain. The Mg(2+) site is built by Asp18, Glu56, Asp78, and Asp142.

This sequence belongs to the RNase H family. In terms of assembly, monomer. Requires Mg(2+) as cofactor.

The protein resides in the cytoplasm. The enzyme catalyses Endonucleolytic cleavage to 5'-phosphomonoester.. In terms of biological role, endonuclease that specifically degrades the RNA of RNA-DNA hybrids. This chain is Ribonuclease H, found in Bordetella bronchiseptica (strain ATCC BAA-588 / NCTC 13252 / RB50) (Alcaligenes bronchisepticus).